Reading from the N-terminus, the 243-residue chain is R-spondin-2 (243 aa).

Positions 1–23 (MRFCLFSFALIILNCMDYSQCQG) are cleaved as a signal peptide. 11 cysteine pairs are disulfide-bonded: C40–C46, C43–C52, C55–C74, C78–C93, C96–C104, C101–C110, C113–C124, C128–C141, C145–C187, C156–C163, and C196–C203. The FU repeat unit spans residues 90–134 (MNRCARCRIENCDSCFSKDFCTKCKVGFYLHRGRCFDECPDGFAP). Residues 144 to 204 (GCEVGHWSEW…RCKMAMRHCP (61 aa)) form the TSP type-1 domain. N160 carries N-linked (GlcNAc...) asparagine glycosylation. The segment covering 204-224 (PGGKRTPKAKEKRNKKKRRKL) has biased composition (basic residues). The segment at 204–243 (PGGKRTPKAKEKRNKKKRRKLIERAQEQHSVFLATDRVNQ) is disordered.

Belongs to the R-spondin family. As to quaternary structure, interacts with WNT1. Binds heparin. Interacts with LGR4, LGR5 and LGR6.

The protein localises to the secreted. Activator of the canonical Wnt signaling pathway by acting as a ligand for LGR4-6 receptors. Upon binding to LGR4-6 (LGR4, LGR5 or LGR6), LGR4-6 associate with phosphorylated LRP6 and frizzled receptors that are activated by extracellular Wnt receptors, triggering the canonical Wnt signaling pathway to increase expression of target genes. Also regulates the canonical Wnt/beta-catenin-dependent pathway and non-canonical Wnt signaling by acting as an inhibitor of ZNRF3, an important regulator of the Wnt signaling pathway. Probably also acts as a ligand for frizzled and LRP receptors. During embryonic development, plays a crucial role in limb specification, amplifying the Wnt signaling pathway independently of LGR4-6 receptors, possibly by acting as a direct antagonistic ligand to RNF43 and ZNRF3, hence governing the number of limbs an embryo should form. The protein is R-spondin-2 (Rspo2) of Mus musculus (Mouse).